Here is a 133-residue protein sequence, read N- to C-terminus: Profilin-3 (133 aa).

It belongs to the profilin family. In terms of assembly, occurs in many kinds of cells as a complex with monomeric actin in a 1:1 ratio.

Its subcellular location is the cytoplasm. It localises to the cytoskeleton. Functionally, binds to actin and affects the structure of the cytoskeleton. At high concentrations, profilin prevents the polymerization of actin, whereas it enhances it at low concentrations. By binding to PIP2, it inhibits the formation of IP3 and DG. This chain is Profilin-3 (PRO3), found in Nicotiana tabacum (Common tobacco).